The following is a 352-amino-acid chain: Holliday junction branch migration complex subunit RuvB (352 aa).

The tract at residues 13 to 201 (FSFRKKELRL…FGISQKIEFY (189 aa)) is large ATPase domain (RuvB-L). Residues R41, G82, K85, T86, T87, 148 to 150 (EDF), R191, Y201, and R238 each bind ATP. T86 contributes to the Mg(2+) binding site. A small ATPAse domain (RuvB-S) region spans residues 202 to 273 (TCDELKQIIV…LIKKALNSYQ (72 aa)). Residues 276–352 (EKGLDSLDRH…KYIDSKDDNF (77 aa)) form a head domain (RuvB-H) region. Positions 330 and 335 each coordinate DNA.

Belongs to the RuvB family. In terms of assembly, homohexamer. Forms an RuvA(8)-RuvB(12)-Holliday junction (HJ) complex. HJ DNA is sandwiched between 2 RuvA tetramers; dsDNA enters through RuvA and exits via RuvB. An RuvB hexamer assembles on each DNA strand where it exits the tetramer. Each RuvB hexamer is contacted by two RuvA subunits (via domain III) on 2 adjacent RuvB subunits; this complex drives branch migration. In the full resolvosome a probable DNA-RuvA(4)-RuvB(12)-RuvC(2) complex forms which resolves the HJ.

The protein resides in the cytoplasm. The enzyme catalyses ATP + H2O = ADP + phosphate + H(+). Its function is as follows. The RuvA-RuvB-RuvC complex processes Holliday junction (HJ) DNA during genetic recombination and DNA repair, while the RuvA-RuvB complex plays an important role in the rescue of blocked DNA replication forks via replication fork reversal (RFR). RuvA specifically binds to HJ cruciform DNA, conferring on it an open structure. The RuvB hexamer acts as an ATP-dependent pump, pulling dsDNA into and through the RuvAB complex. RuvB forms 2 homohexamers on either side of HJ DNA bound by 1 or 2 RuvA tetramers; 4 subunits per hexamer contact DNA at a time. Coordinated motions by a converter formed by DNA-disengaged RuvB subunits stimulates ATP hydrolysis and nucleotide exchange. Immobilization of the converter enables RuvB to convert the ATP-contained energy into a lever motion, pulling 2 nucleotides of DNA out of the RuvA tetramer per ATP hydrolyzed, thus driving DNA branch migration. The RuvB motors rotate together with the DNA substrate, which together with the progressing nucleotide cycle form the mechanistic basis for DNA recombination by continuous HJ branch migration. Branch migration allows RuvC to scan DNA until it finds its consensus sequence, where it cleaves and resolves cruciform DNA. The protein is Holliday junction branch migration complex subunit RuvB of Prochlorococcus marinus (strain AS9601).